Here is a 194-residue protein sequence, read N- to C-terminus: Holliday junction branch migration complex subunit RuvA (194 aa).

Residues 1 to 64 (MIGRLRGILA…EDSVSLYGFL (64 aa)) form a domain I region. The interval 65–140 (REGERRLFRD…RAADFSSGAP (76 aa)) is domain II. The interval 140–144 (PITGQ) is flexible linker. The interval 145–194 (LGPDAVSEATVALQQLGYKPAEAARMARDAGAEGDEVATVIRKALQAALR) is domain III.

This sequence belongs to the RuvA family. As to quaternary structure, homotetramer. Forms an RuvA(8)-RuvB(12)-Holliday junction (HJ) complex. HJ DNA is sandwiched between 2 RuvA tetramers; dsDNA enters through RuvA and exits via RuvB. An RuvB hexamer assembles on each DNA strand where it exits the tetramer. Each RuvB hexamer is contacted by two RuvA subunits (via domain III) on 2 adjacent RuvB subunits; this complex drives branch migration. In the full resolvosome a probable DNA-RuvA(4)-RuvB(12)-RuvC(2) complex forms which resolves the HJ.

The protein resides in the cytoplasm. Functionally, the RuvA-RuvB-RuvC complex processes Holliday junction (HJ) DNA during genetic recombination and DNA repair, while the RuvA-RuvB complex plays an important role in the rescue of blocked DNA replication forks via replication fork reversal (RFR). RuvA specifically binds to HJ cruciform DNA, conferring on it an open structure. The RuvB hexamer acts as an ATP-dependent pump, pulling dsDNA into and through the RuvAB complex. HJ branch migration allows RuvC to scan DNA until it finds its consensus sequence, where it cleaves and resolves the cruciform DNA. The polypeptide is Holliday junction branch migration complex subunit RuvA (Xanthomonas axonopodis pv. citri (strain 306)).